The primary structure comprises 230 residues: NAD(P)H-hydrate epimerase (230 aa).

The 208-residue stretch at 11 to 218 (AIDVDQELFT…ALQRKYGLNL (208 aa)) folds into the YjeF N-terminal domain. (6S)-NADPHX is bound at residue 61 to 65 (NNGGD). K(+) is bound by residues Asn-62 and Asp-126. Residues 130–136 (GFSFKPP) and Asp-159 each bind (6S)-NADPHX. Ser-162 is a K(+) binding site.

This sequence belongs to the NnrE/AIBP family. Requires K(+) as cofactor.

The catalysed reaction is (6R)-NADHX = (6S)-NADHX. It catalyses the reaction (6R)-NADPHX = (6S)-NADPHX. Functionally, catalyzes the epimerization of the S- and R-forms of NAD(P)HX, a damaged form of NAD(P)H that is a result of enzymatic or heat-dependent hydration. This is a prerequisite for the S-specific NAD(P)H-hydrate dehydratase to allow the repair of both epimers of NAD(P)HX. The protein is NAD(P)H-hydrate epimerase of Drosophila yakuba (Fruit fly).